Reading from the N-terminus, the 535-residue chain is Calcium-dependent protein kinase 7 (535 aa).

A disordered region spans residues 1-29; the sequence is MGNCCGNPSSATNQSKQGKPKNKNNPFYS. Gly-2 is lipidated: N-myristoyl glycine. The region spanning 59-317 is the Protein kinase domain; it reads YDLGREVGRG…AAQVLEHTWI (259 aa). ATP is bound by residues 65–73 and Lys-88; that span reads VGRGEFGIT. Asp-183 serves as the catalytic Proton acceptor. Ser-223 carries the phosphoserine modification. Positions 323–353 are autoinhibitory domain; the sequence is APNVSLGETVKARLKQFSVMNKLKKRALRVI. EF-hand domains lie at 360 to 395, 396 to 431, 432 to 467, and 468 to 504; these read EEAAGIKEAFEMMDVNKRGKINLEELKYGLQKAGQQ, IADTDLQILMEATDVDGDGTLNYSEFVAVSVHLKKM, ANDEHLHKAFNFFDQNQSGYIEIDELREALNDELDN, and TSSEEVIAAIMQDVDTDKDGRISYEEFVAMMKAGTDW. The Ca(2+) site is built by Asp-373, Asn-375, Lys-379, Glu-384, Asp-409, Asp-411, Asp-413, Thr-415, Glu-420, Asp-445, Asn-447, Ser-449, Tyr-451, Glu-456, Asp-482, Asp-484, Asp-486, and Arg-488. Ser-490 bears the Phosphoserine mark. Glu-493 is a binding site for Ca(2+).

The protein belongs to the protein kinase superfamily. Ser/Thr protein kinase family. CDPK subfamily.

Its subcellular location is the cell membrane. The enzyme catalyses L-seryl-[protein] + ATP = O-phospho-L-seryl-[protein] + ADP + H(+). The catalysed reaction is L-threonyl-[protein] + ATP = O-phospho-L-threonyl-[protein] + ADP + H(+). Activated by calcium. Autophosphorylation may play an important role in the regulation of the kinase activity. May play a role in signal transduction pathways that involve calcium as a second messenger. This chain is Calcium-dependent protein kinase 7 (CPK7), found in Arabidopsis thaliana (Mouse-ear cress).